Consider the following 149-residue polypeptide: Small ribosomal subunit protein uS17c (149 aa).

Residues 1–49 constitute a chloroplast transit peptide; sequence MITSSLTSSLQALKLSSPFAHGSTPLSSLSKPNSFPNHRMPALVPVIRA.

This sequence belongs to the universal ribosomal protein uS17 family. Part of the 30S ribosomal subunit.

It is found in the plastid. Its subcellular location is the chloroplast. Its function is as follows. One of the primary rRNA binding proteins, it binds specifically to the 5'-end of 16S ribosomal RNA. Required for optimal plastid performance in terms of photosynthesis and growth. Required for the translation of plastid mRNAs. Plays a critical role in biosynthesis of thylakoid membrane proteins encoded by chloroplast genes. This Arabidopsis thaliana (Mouse-ear cress) protein is Small ribosomal subunit protein uS17c (RPS17).